A 106-amino-acid chain; its full sequence is ATP-dependent Clp protease adapter protein ClpS (106 aa).

Residues 1-20 (MKVDMSTSVKDDAQLEASRV) form a disordered region.

The protein belongs to the ClpS family. In terms of assembly, binds to the N-terminal domain of the chaperone ClpA.

Its function is as follows. Involved in the modulation of the specificity of the ClpAP-mediated ATP-dependent protein degradation. In Chromobacterium violaceum (strain ATCC 12472 / DSM 30191 / JCM 1249 / CCUG 213 / NBRC 12614 / NCIMB 9131 / NCTC 9757 / MK), this protein is ATP-dependent Clp protease adapter protein ClpS.